We begin with the raw amino-acid sequence, 148 residues long: Vascular endothelial growth factor homolog (148 aa).

The N-terminal stretch at 1–25 is a signal peptide; the sequence is MKLTATLQVVVALLICMYNLPECVS. 3 cysteine pairs are disulfide-bonded: cysteine 46–cysteine 88, cysteine 77–cysteine 130, and cysteine 81–cysteine 132. Asparagine 95 carries N-linked (GlcNAc...) asparagine; by host glycosylation.

Belongs to the PDGF/VEGF growth factor family. In terms of assembly, homodimer; disulfide-linked.

The protein localises to the secreted. In terms of biological role, induces endothelial proliferation. The sequence is that of Vascular endothelial growth factor homolog from Orf virus (strain NZ7) (OV NZ-7).